Here is a 502-residue protein sequence, read N- to C-terminus: Phenylacetaldehyde dehydrogenase (502 aa).

251-256 (GSTEVG) is an NAD(+) binding site. Active-site residues include glutamate 273 and cysteine 307.

This sequence belongs to the aldehyde dehydrogenase family.

It carries out the reaction 2-phenylacetaldehyde + NAD(+) + H2O = 2-phenylacetate + NADH + 2 H(+). Its pathway is aromatic compound metabolism. In terms of biological role, phenylacetaldehyde dehydrogenase that catalyzes the last step in the aerobic styrene degradation pathway by mediating oxidation of phenylacetaldehyde to phenylacetic acid. The sequence is that of Phenylacetaldehyde dehydrogenase (styD) from Pseudomonas fluorescens.